A 154-amino-acid polypeptide reads, in one-letter code: uncharacterized protein (154 aa).

3 helical membrane passes run 26 to 48 (VSGWLTIIGILVAIAGIIIGVVT), 97 to 119 (IAMFGIALAVYGGIVGLLLLIVF), and 132 to 150 (GLYTFLAIAIFCLMVYCAW).

It localises to the cell membrane. This is an uncharacterized protein from Archaeoglobus fulgidus (strain ATCC 49558 / DSM 4304 / JCM 9628 / NBRC 100126 / VC-16).